A 163-amino-acid polypeptide reads, in one-letter code: F-box protein At2g35280 (163 aa).

The region spanning 8 to 57 is the F-box domain; the sequence is ISRLEALPQDLLREIVAKIGVKSAEDYHNCILSCKELGASANDERVLKTL.

The chain is F-box protein At2g35280 from Arabidopsis thaliana (Mouse-ear cress).